Consider the following 486-residue polypeptide: Ammonium transporter 2 member 1 (486 aa).

Transmembrane regions (helical) follow at residues 29-49, 57-77, 127-147, 161-181, 190-210, 225-245, 252-272, 285-305, 309-329, 343-363, and 399-419; these read ASTL…GSIV, SAFM…LVGF, LVLF…GSVL, LWLL…GFLY, GGYV…YWVG, ILLM…FNGG, IAAS…LLMW, VIGA…GAGL, WAAV…MMIL, LAVF…TGLL, and FVIA…GLFI. Basic and acidic residues predominate over residues 454–470; sequence RHDLSRGGGGGDRDGPA. The tract at residues 454–473 is disordered; it reads RHDLSRGGGGGDRDGPAGER.

This sequence belongs to the ammonia transporter channel (TC 1.A.11.2) family. In terms of tissue distribution, expressed in roots and leaf blades and sheaths.

It is found in the cell membrane. In terms of biological role, involved in ammonium transport. This is Ammonium transporter 2 member 1 (AMT2-1) from Oryza sativa subsp. japonica (Rice).